We begin with the raw amino-acid sequence, 242 residues long: Protein MHF1 homolog (242 aa).

Residues 208–242 (LKAKEPQSERKRKKGSAKKEDKASSSNAVRITTDL) are disordered. A compositionally biased stretch (polar residues) spans 231–242 (SSSNAVRITTDL).

The protein belongs to the TAF9 family. CENP-S/MHF1 subfamily.

Its subcellular location is the nucleus. Functionally, involved in the promotion of spontaneous somatic homologous recombination (HR) events, which is opposite to the function of FANCM in ordered HR. Only FANCM is essential for replicative repair in the absence of the endonuclease MUS81. Acts in the same pathway as FANCM to restrain class II meiotic crossing over (CO), and acts with FANCM during meiosis to repair interstrand cross-links (ICLs). This common pathway between MHF1 and FANCM is in parallel to the pathway that involves the RECQ4A helicase. This chain is Protein MHF1 homolog, found in Arabidopsis thaliana (Mouse-ear cress).